Reading from the N-terminus, the 234-residue chain is Preflagellin peptidase (234 aa).

Position 1 (Met1) is a topological domain, cytoplasmic. A helical transmembrane segment spans residues 2–18 (INFIVGAIGLLIASIYD). At 19 to 23 (LKSRE) the chain is on the extracellular side. The chain crosses the membrane as a helical span at residues 24–46 (IEDYVWVSMVIFGLIYNGYLSFI). At 47-49 (SHD) the chain is on the cytoplasmic side. The helical transmembrane segment at 50–72 (MLYVIQSIVGFIVCFFLGFFMFL) threads the bilayer. The Extracellular segment spans residues 73 to 78 (LGVGGG). A helical transmembrane segment spans residues 79–89 (DGKLIMGLGAL). The Cytoplasmic portion of the chain corresponds to 90-110 (IPKYNMPIHTPLGAILNYLYL). The helical transmembrane segment at 111 to 139 (PSFPIMVVINAMFFSITLPIIIFLRNVIR) threads the bilayer. Topologically, residues 140-205 (GVKPKTKKEV…EEIWVTPAIP (66 aa)) are extracellular. The helical transmembrane segment at 206–217 (FVVPIFLSYLLT) threads the bilayer. The Cytoplasmic portion of the chain corresponds to 218–234 (SIIGDKIIGIFLSVFGL).

This sequence belongs to the peptidase A24 family. Archaeal preflagellin peptidase subfamily.

The protein localises to the cell membrane. The enzyme catalyses Cleaves the signal peptide of 3 to 12 amino acids from the N-terminal of preflagellin, usually at Arg-Gly-|- or Lys-Gly-|-, to release flagellin.. Its function is as follows. Cleaves the N-terminal leader peptide from preflagellins. This chain is Preflagellin peptidase (flaK), found in Methanocaldococcus jannaschii (strain ATCC 43067 / DSM 2661 / JAL-1 / JCM 10045 / NBRC 100440) (Methanococcus jannaschii).